Consider the following 142-residue polypeptide: Large ribosomal subunit protein uL22c (142 aa).

It belongs to the universal ribosomal protein uL22 family. In terms of assembly, part of the 50S ribosomal subunit.

The protein resides in the plastid. It is found in the chloroplast. Its function is as follows. This protein binds specifically to 23S rRNA. Functionally, the globular domain of the protein is located near the polypeptide exit tunnel on the outside of the subunit, while an extended beta-hairpin is found that lines the wall of the exit tunnel in the center of the 70S ribosome. This is Large ribosomal subunit protein uL22c (rpl22) from Ceratophyllum demersum (Rigid hornwort).